The primary structure comprises 285 residues: Bifunctional protein FolD (285 aa).

NADP(+) contacts are provided by residues 164 to 166 (GRS), S193, and I234.

This sequence belongs to the tetrahydrofolate dehydrogenase/cyclohydrolase family. As to quaternary structure, homodimer.

It catalyses the reaction (6R)-5,10-methylene-5,6,7,8-tetrahydrofolate + NADP(+) = (6R)-5,10-methenyltetrahydrofolate + NADPH. The catalysed reaction is (6R)-5,10-methenyltetrahydrofolate + H2O = (6R)-10-formyltetrahydrofolate + H(+). Its pathway is one-carbon metabolism; tetrahydrofolate interconversion. Catalyzes the oxidation of 5,10-methylenetetrahydrofolate to 5,10-methenyltetrahydrofolate and then the hydrolysis of 5,10-methenyltetrahydrofolate to 10-formyltetrahydrofolate. This chain is Bifunctional protein FolD, found in Desulfovibrio desulfuricans (strain ATCC 27774 / DSM 6949 / MB).